The following is a 233-amino-acid chain: Phosphoenolpyruvate guanylyltransferase 1 (233 aa).

The phosphoenolpyruvate site is built by T154, G171, and S174.

The protein belongs to the CofC family.

The enzyme catalyses phosphoenolpyruvate + GTP + H(+) = enolpyruvoyl-2-diphospho-5'-guanosine + diphosphate. Its pathway is cofactor biosynthesis; coenzyme F420 biosynthesis. Guanylyltransferase that catalyzes the activation of phosphoenolpyruvate (PEP) as enolpyruvoyl-2-diphospho-5'-guanosine, via the condensation of PEP with GTP. It is involved in the biosynthesis of coenzyme F420, a hydride carrier cofactor. This is Phosphoenolpyruvate guanylyltransferase 1 from Rhodococcus jostii (strain RHA1).